We begin with the raw amino-acid sequence, 388 residues long: Processive diacylglycerol beta-glucosyltransferase (388 aa).

This sequence belongs to the glycosyltransferase 28 family. UgtP subfamily.

It is found in the cell membrane. The catalysed reaction is a 1,2-diacyl-3-O-(beta-D-glucopyranosyl)-sn-glycerol + UDP-alpha-D-glucose = a 1,2-diacyl-3-O-(beta-D-Glc-(1-&gt;6)-beta-D-Glc)-sn-glycerol + UDP + H(+). It carries out the reaction a 1,2-diacyl-3-O-(beta-D-Glc-(1-&gt;6)-beta-D-Glc)-sn-glycerol + UDP-alpha-D-glucose = a 1,2-diacyl-3-O-(beta-D-Glc-(1-&gt;6)-beta-D-Glc-(1-&gt;6)-beta-D-Glc)-sn-glycerol + UDP + H(+). It catalyses the reaction a 1,2-diacyl-sn-glycerol + UDP-alpha-D-glucose = a 1,2-diacyl-3-O-(beta-D-glucopyranosyl)-sn-glycerol + UDP + H(+). The protein operates within glycolipid metabolism; diglucosyl-diacylglycerol biosynthesis. In terms of biological role, processive glucosyltransferase involved in the biosynthesis of both the bilayer- and non-bilayer-forming membrane glucolipids. Is able to successively transfer up to three glucosyl residues to diacylglycerol (DAG), thereby catalyzing the formation of beta-monoglucosyl-DAG (3-O-(beta-D-glucopyranosyl)-1,2-diacyl-sn-glycerol), beta-diglucosyl-DAG (3-O-(beta-D-glucopyranosyl-beta-(1-&gt;6)-D-glucopyranosyl)-1,2-diacyl-sn-glycerol) and beta-triglucosyl-DAG (3-O-(beta-D-glucopyranosyl-beta-(1-&gt;6)-D-glucopyranosyl-beta-(1-&gt;6)-D-glucopyranosyl)-1,2-diacyl-sn-glycerol). Beta-diglucosyl-DAG is the predominant glycolipid found in Bacillales and is also used as a membrane anchor for lipoteichoic acid (LTA). In Bacillus cytotoxicus (strain DSM 22905 / CIP 110041 / 391-98 / NVH 391-98), this protein is Processive diacylglycerol beta-glucosyltransferase.